The primary structure comprises 620 residues: Zinc finger protein GLIS1 (620 aa).

Positions 108–132 are disordered; the sequence is PLTGDLGGPSKRARPGPASTDSHEG. The segment at 195 to 220 adopts a C2H2-type 1 zinc-finger fold; sequence QACRWVDCCAAYEQQEELVRHIEKSH. The C2H2-type 2; atypical zinc-finger motif lies at 229-256; sequence FTCFWAGCVRRYKPFNARYKLLIHMRVH. 3 consecutive C2H2-type zinc fingers follow at residues 262-286, 292-316, and 322-346; these read NKCM…LRSH, YLCQ…QRTH, and YACQ…VKAH. The Bipartite nuclear localization signal signature appears at 340-356; it reads RKHVKAHSAKEQQVRKK. The disordered stretch occupies residues 414-515; sequence ASGLLPPAHD…PPLPSPQGYQ (102 aa). The segment covering 477 to 488 has biased composition (low complexity); sequence SSQSHSPGGQPF. Over residues 489–510 the composition is skewed to pro residues; that stretch reads PTLPSKPSYPPFQSPPPPPLPS.

Belongs to the GLI C2H2-type zinc-finger protein family. In terms of assembly, interacts with KLF4. Interacts with POU5F1 and/or POU5F1B. Interacts with SOX2.

Its subcellular location is the nucleus. Acts both as a repressor and an activator of transcription. Binds to the consensus sequence 5'-GACCACCCAC-3'. By controlling the expression of genes involved in cell differentiation inhibits the lineage commitment of multipotent cells. Prevents, for instance, the differentiation of multipotent mesenchymal cells into adipocyte and osteoblast. This is Zinc finger protein GLIS1 from Homo sapiens (Human).